The primary structure comprises 399 residues: Bombesin receptor subtype-3 (399 aa).

Residues 1–41 (MSQRQPQSPNQTLISITNDTETSSSAVSNDTTPKGWTGDNS) are Extracellular-facing. Residues Asn-10, Asn-18, and Asn-29 are each glycosylated (N-linked (GlcNAc...) asparagine). Residues 42–63 (PGIEALCAIYITYAVIISVGIL) form a helical membrane-spanning segment. The Cytoplasmic portion of the chain corresponds to 64–82 (GNAILIKVFFKTKSMQTVP). Residues 83-103 (NIFITSLAFGDLLLLLTCVPV) form a helical membrane-spanning segment. At 104–121 (DATHYLAEGWLFGKVGCK) the chain is on the extracellular side. Residues Cys-120 and Cys-203 are joined by a disulfide bond. Residues 122 to 143 (VLSFIRLTSVGVSVFTLTILSA) form a helical membrane-spanning segment. At 144-163 (DRYKAVVKPLERQPSNAILK) the chain is on the cytoplasmic side. The helical transmembrane segment at 164-184 (TCAKAGGIWIMAMIFALPEAI) threads the bilayer. Residues 185-220 (FSNVYTFQDPNRNVTFESCNSYPISERLLQEIHSLL) are Extracellular-facing. Residues 221 to 241 (CFLVFYIIPLSIISVYYSLIA) traverse the membrane as a helical segment. The Cytoplasmic portion of the chain corresponds to 242–272 (RTLYKSTLNIPTEEQSHARKQIESRKRIAKT). A helical transmembrane segment spans residues 273–293 (VLVLVALFALCWLPNHLLYLY). Over 294-313 (HSFTYESYAEPSDVPFVVTI) the chain is Extracellular. A helical transmembrane segment spans residues 314-333 (FSRVLAFSNSCVNPFALYWL). The Cytoplasmic portion of the chain corresponds to 334 to 399 (SKTFQKHFKA…STAKKGEDKV (66 aa)). A lipid anchor (S-palmitoyl cysteine) is attached at Cys-347.

This sequence belongs to the G-protein coupled receptor 1 family. Interacts with C6orf89.

It is found in the cell membrane. Functionally, role in sperm cell division, maturation, or function. This receptor mediates its action by association with G proteins that activate a phosphatidylinositol-calcium second messenger system. This is Bombesin receptor subtype-3 (Brs3) from Rattus norvegicus (Rat).